Consider the following 237-residue polypeptide: Phosphoribosylaminoimidazole-succinocarboxamide synthase (237 aa).

The protein belongs to the SAICAR synthetase family.

The catalysed reaction is 5-amino-1-(5-phospho-D-ribosyl)imidazole-4-carboxylate + L-aspartate + ATP = (2S)-2-[5-amino-1-(5-phospho-beta-D-ribosyl)imidazole-4-carboxamido]succinate + ADP + phosphate + 2 H(+). It participates in purine metabolism; IMP biosynthesis via de novo pathway; 5-amino-1-(5-phospho-D-ribosyl)imidazole-4-carboxamide from 5-amino-1-(5-phospho-D-ribosyl)imidazole-4-carboxylate: step 1/2. This is Phosphoribosylaminoimidazole-succinocarboxamide synthase from Pseudomonas fluorescens (strain Pf0-1).